A 475-amino-acid chain; its full sequence is Ribulose bisphosphate carboxylase large chain (475 aa).

A propeptide spanning residues methionine 1–serine 2 is cleaved from the precursor. Residue proline 3 is modified to N-acetylproline. An N6,N6,N6-trimethyllysine modification is found at lysine 14. Positions 123 and 173 each coordinate substrate. Catalysis depends on lysine 175, which acts as the Proton acceptor. Lysine 177 lines the substrate pocket. 3 residues coordinate Mg(2+): lysine 201, aspartate 203, and glutamate 204. Residue lysine 201 is modified to N6-carboxylysine. Histidine 294 acts as the Proton acceptor in catalysis. Residues arginine 295, histidine 327, and serine 379 each contribute to the substrate site.

It belongs to the RuBisCO large chain family. Type I subfamily. As to quaternary structure, heterohexadecamer of 8 large chains and 8 small chains; disulfide-linked. The disulfide link is formed within the large subunit homodimers. It depends on Mg(2+) as a cofactor. The disulfide bond which can form in the large chain dimeric partners within the hexadecamer appears to be associated with oxidative stress and protein turnover.

The protein localises to the plastid. It is found in the chloroplast. It catalyses the reaction 2 (2R)-3-phosphoglycerate + 2 H(+) = D-ribulose 1,5-bisphosphate + CO2 + H2O. It carries out the reaction D-ribulose 1,5-bisphosphate + O2 = 2-phosphoglycolate + (2R)-3-phosphoglycerate + 2 H(+). Its function is as follows. RuBisCO catalyzes two reactions: the carboxylation of D-ribulose 1,5-bisphosphate, the primary event in carbon dioxide fixation, as well as the oxidative fragmentation of the pentose substrate in the photorespiration process. Both reactions occur simultaneously and in competition at the same active site. In Cycas taitungensis (Prince sago), this protein is Ribulose bisphosphate carboxylase large chain.